The primary structure comprises 359 residues: Queuine tRNA-ribosyltransferase (359 aa).

D92 (proton acceptor) is an active-site residue. Substrate is bound by residues D92–F96, D146, Q189, and G216. Residues G245–D251 form an RNA binding region. The active-site Nucleophile is D264. Residues T269–R273 form an RNA binding; important for wobble base 34 recognition region. Zn(2+)-binding residues include C302, C304, C307, and H333.

Belongs to the queuine tRNA-ribosyltransferase family. Homodimer. Within each dimer, one monomer is responsible for RNA recognition and catalysis, while the other monomer binds to the replacement base PreQ1. It depends on Zn(2+) as a cofactor.

The enzyme catalyses 7-aminomethyl-7-carbaguanine + guanosine(34) in tRNA = 7-aminomethyl-7-carbaguanosine(34) in tRNA + guanine. It participates in tRNA modification; tRNA-queuosine biosynthesis. Catalyzes the base-exchange of a guanine (G) residue with the queuine precursor 7-aminomethyl-7-deazaguanine (PreQ1) at position 34 (anticodon wobble position) in tRNAs with GU(N) anticodons (tRNA-Asp, -Asn, -His and -Tyr). Catalysis occurs through a double-displacement mechanism. The nucleophile active site attacks the C1' of nucleotide 34 to detach the guanine base from the RNA, forming a covalent enzyme-RNA intermediate. The proton acceptor active site deprotonates the incoming PreQ1, allowing a nucleophilic attack on the C1' of the ribose to form the product. After dissociation, two additional enzymatic reactions on the tRNA convert PreQ1 to queuine (Q), resulting in the hypermodified nucleoside queuosine (7-(((4,5-cis-dihydroxy-2-cyclopenten-1-yl)amino)methyl)-7-deazaguanosine). The polypeptide is Queuine tRNA-ribosyltransferase (Rickettsia bellii (strain RML369-C)).